The sequence spans 172 residues: 3-hydroxydecanoyl-[acyl-carrier-protein] dehydratase (172 aa).

His-71 is a catalytic residue.

This sequence belongs to the thioester dehydratase family. FabA subfamily. As to quaternary structure, homodimer.

Its subcellular location is the cytoplasm. It carries out the reaction a (3R)-hydroxyacyl-[ACP] = a (2E)-enoyl-[ACP] + H2O. The catalysed reaction is (3R)-hydroxydecanoyl-[ACP] = (2E)-decenoyl-[ACP] + H2O. The enzyme catalyses (2E)-decenoyl-[ACP] = (3Z)-decenoyl-[ACP]. It functions in the pathway lipid metabolism; fatty acid biosynthesis. Necessary for the introduction of cis unsaturation into fatty acids. Catalyzes the dehydration of (3R)-3-hydroxydecanoyl-ACP to E-(2)-decenoyl-ACP and then its isomerization to Z-(3)-decenoyl-ACP. Can catalyze the dehydratase reaction for beta-hydroxyacyl-ACPs with saturated chain lengths up to 16:0, being most active on intermediate chain length. This is 3-hydroxydecanoyl-[acyl-carrier-protein] dehydratase from Serratia proteamaculans (strain 568).